We begin with the raw amino-acid sequence, 147 residues long: Hemoglobin subunit beta (147 aa).

Positions 3-147 (EWTDKERTII…VVSALGKQYH (145 aa)) constitute a Globin domain. 2 residues coordinate heme b: His64 and His93.

It belongs to the globin family. As to quaternary structure, heterotetramer of two alpha chains and two beta chains. Red blood cells.

In terms of biological role, involved in oxygen transport from gills to the various peripheral tissues. This chain is Hemoglobin subunit beta, found in Trematomus newnesi (Dusky notothen).